A 501-amino-acid polypeptide reads, in one-letter code: Zinc finger C3HC-type protein 1 (501 aa).

Position 2 is an N-acetylalanine (Ala2). The disordered stretch occupies residues 21 to 73 (VVRSPEGTPQKVRELIDEGIVPEEGGTEPKDTAATFQSVDGSPQAEQSPLEST). A Phosphoserine modification is found at Ser24. The residue at position 28 (Thr28) is a Phosphothreonine. Positions 54–72 (ATFQSVDGSPQAEQSPLES) are enriched in polar residues. Phosphoserine occurs at positions 58, 62, and 68. Position 84 is a phosphothreonine (Thr84). The C3HC-type zinc finger occupies 102-156 (CAKYGWVTVECDMLKCSSCQAFLCASLQPTFDFGRYKERCAELKKSLCSAHEKFC). The disordered stretch occupies residues 302 to 421 (SPIPGVEGRP…TSPRSFFDPT (120 aa)). Ser320 and Ser328 each carry phosphoserine. The span at 326–338 (TRSQDATVSPGSE) shows a compositional bias: polar residues. Position 332 is a phosphothreonine (Thr332). Phosphoserine is present on residues Ser334, Ser337, Ser343, Ser353, Ser358, Ser369, and Ser380. Composition is skewed to polar residues over residues 350 to 359 (RTRSWESSSP) and 369 to 383 (SPTTRSRPVTRSMGT). Residue Thr383 is modified to Phosphothreonine. Phosphoserine is present on Ser394. The Nuclear localization signal signature appears at 395–401 (PLRRTKR). A phosphoserine mark is found at Ser406 and Ser482. Low complexity predominate over residues 406–420 (SSSSSDTSPRSFFDP).

As to quaternary structure, interacts with TPR; this interaction mediates ZC3HC1 nuclear envelopes (NE)-association but also required for proper positioning of a substantial amount of TPR at the nuclear basket (NB). In terms of processing, phosphorylated. May also be weakly phosphorylated on Tyr residues.

Its subcellular location is the nucleus. The protein localises to the nucleus envelope. Required for proper positioning of a substantial amount of TPR at the nuclear basket (NB) through interaction with TPR. The chain is Zinc finger C3HC-type protein 1 (Zc3hc1) from Mus musculus (Mouse).